A 118-amino-acid polypeptide reads, in one-letter code: MPRVKGGTVTRARRKKVIKLAKGYFGAKRTLYKTAKQQVMKSGQYAFRDRRQRKRDFRKLWITRINAAARNHGMSYSKLMNGLKQADIDINRKMLSEIAISDDKAFGELVEKAKAALK.

Belongs to the bacterial ribosomal protein bL20 family.

In terms of biological role, binds directly to 23S ribosomal RNA and is necessary for the in vitro assembly process of the 50S ribosomal subunit. It is not involved in the protein synthesizing functions of that subunit. This chain is Large ribosomal subunit protein bL20, found in Staphylococcus carnosus (strain TM300).